The primary structure comprises 516 residues: Maturase K (516 aa).

The protein belongs to the intron maturase 2 family. MatK subfamily.

The protein resides in the plastid. Its subcellular location is the chloroplast. Usually encoded in the trnK tRNA gene intron. Probably assists in splicing its own and other chloroplast group II introns. The chain is Maturase K from Disporum sessile (Japanese fairy bells).